Consider the following 431-residue polypeptide: MANVVVVGAQWGDEGKGKVVDIYTEFADDVVRYQGGNNAGHTLVVGDEKIVLHLIPSGILHKGKRCIIGNGVVLDPEVFIREITNLKAKGKFQDDGVLLLSESLHIIMPYHKRIDIAREAKSGAKKIGTTGRGIGPAYEDKIGRRGIRLMDLLDKQVFTRKLKESLEEKNFLLEKMLGEKPFSFEEIFDEYSAFADTLRTYVADTTLVLHQDLKAGKKLLFEGAQGTLLDVDHGTYPYVTSSSTCAGGACTGTGASPRDINEIIGISKAYVTRVGSGPFPTELEDADGEKLRQTGGEFGATTGRPRRCGWFDALVIKYAVRVNGLTGIALTKLDVLSDFETIKICTGYSYNGKFLSELPANLDIFEKCQPVYEEMPGWQTDITAARSFDDLPEKARTYVKRLEELAGCPIVLVSVGPRRDQTIMLKNPFEA.

GTP contacts are provided by residues 12 to 18 (GDEGKGK) and 40 to 42 (GHT). The Proton acceptor role is filled by aspartate 13. Residues aspartate 13 and glycine 40 each contribute to the Mg(2+) site. IMP is bound by residues 13 to 16 (DEGK), 38 to 41 (NAGH), threonine 130, arginine 144, glutamine 225, threonine 240, and arginine 304. Histidine 41 serves as the catalytic Proton donor. 300–306 (ATTGRPR) provides a ligand contact to substrate. GTP is bound by residues arginine 306, 332–334 (KLD), and 414–416 (SVG).

The protein belongs to the adenylosuccinate synthetase family. As to quaternary structure, homodimer. Requires Mg(2+) as cofactor.

It localises to the cytoplasm. The enzyme catalyses IMP + L-aspartate + GTP = N(6)-(1,2-dicarboxyethyl)-AMP + GDP + phosphate + 2 H(+). The protein operates within purine metabolism; AMP biosynthesis via de novo pathway; AMP from IMP: step 1/2. In terms of biological role, plays an important role in the de novo pathway of purine nucleotide biosynthesis. Catalyzes the first committed step in the biosynthesis of AMP from IMP. This is Adenylosuccinate synthetase from Geotalea daltonii (strain DSM 22248 / JCM 15807 / FRC-32) (Geobacter daltonii).